Reading from the N-terminus, the 246-residue chain is MSQKIALVTGAMGGLGTAICQALAKDGCIVAANCLPNFEPAAAWLGQQEALGFKFYVAEGDVSDFESCKAMVAKIEADLGPVDILVNNAGITRDKFFAKMDKAQWDAVIATNLSSLFNVTQQVSPKMAERGWGRIINISSVNGVKGQAGQTNYSAAKAGVIGFTKALAAELATKGVTVNAIAPGYIGTDMVMAIREDIRQAITDSVPMKRLGRPDEIGGAVSYLASEIAGYVTGSTLNINGGLNYQ.

8–32 is an NAD(+) binding site; the sequence is VTGAMGGLGTAICQALAKDGCIVAA. Residue S140 participates in substrate binding. Catalysis depends on Y153, which acts as the Proton acceptor.

The protein belongs to the short-chain dehydrogenases/reductases (SDR) family.

Proposed to modify Nod factor fatty acyl chain. This Azospirillum brasilense protein is Nodulation protein G (nodG).